The following is a 119-amino-acid chain: Holo-[acyl-carrier-protein] synthase (119 aa).

Positions 8 and 58 each coordinate Mg(2+).

Belongs to the P-Pant transferase superfamily. AcpS family. It depends on Mg(2+) as a cofactor.

It localises to the cytoplasm. It catalyses the reaction apo-[ACP] + CoA = holo-[ACP] + adenosine 3',5'-bisphosphate + H(+). Functionally, transfers the 4'-phosphopantetheine moiety from coenzyme A to a Ser of acyl-carrier-protein. In Lactobacillus johnsonii (strain CNCM I-12250 / La1 / NCC 533), this protein is Holo-[acyl-carrier-protein] synthase.